A 479-amino-acid polypeptide reads, in one-letter code: Glycogen synthase (479 aa).

Lysine 15 is an ADP-alpha-D-glucose binding site.

The protein belongs to the glycosyltransferase 1 family. Bacterial/plant glycogen synthase subfamily.

The enzyme catalyses [(1-&gt;4)-alpha-D-glucosyl](n) + ADP-alpha-D-glucose = [(1-&gt;4)-alpha-D-glucosyl](n+1) + ADP + H(+). The protein operates within glycan biosynthesis; glycogen biosynthesis. Synthesizes alpha-1,4-glucan chains using ADP-glucose. The polypeptide is Glycogen synthase (Nostoc punctiforme (strain ATCC 29133 / PCC 73102)).